The following is a 962-amino-acid chain: Nonsense-mediated mRNA decay factor SMG8 (962 aa).

Residues 634–661 (RSPEISSQIASSGLSSRSNSTSSGTSSA) form a disordered region. A compositionally biased stretch (low complexity) spans 639 to 661 (SSQIASSGLSSRSNSTSSGTSSA).

This sequence belongs to the SMG8 family.

Its function is as follows. Involved in nonsense-mediated decay (NMD) of mRNAs containing premature stop codons. Probable component of kinase complex containing nonC and recruited to stalled ribosomes. In Drosophila virilis (Fruit fly), this protein is Nonsense-mediated mRNA decay factor SMG8.